The sequence spans 730 residues: MNQKYSVTVPELGITFSTGSIAQLANGAVNVQVGETNVFVTACVAQTTKPGQDWFPLTVDYREKYAAAGRFPGGYFKREGRPSEKEILTSRLCDRPCRPLFPEGFLNEVQIIGQLFSADLVNESDISMVNGASAALAISDIPWNGPIAAVRVAEIEGKFVANPTIDQMFASSLDLIYVGNEKDMLMIEGSADQIPEERFIEALAFGHESIQPILKAIKELVAQCGKPKGTFPLVGATPEARTIIERVVPTERLIEAIFGKEKAVRANAVKLLKEEAKAALTAELGEGKFTDVDLNVVFEDLQYKAYRKTVLERGVRADGRGQKDIRPLQAQVGVLPRVHGSAMFQRGDTQNIALTTLGPTKDAQDLDALTGGVKSKSFLLHYNFPPFSVGETGRFTGPGRREIGHGALAERSLVPVLPPEDVFPYSIRVVSEIMASNGSTSMASICGGCLSLMDAGVPIIAPVAGISCGLMTQNASDGSIEKWVTITDILGEEDHFGDMDFKLAGTSKGITGFQLDLKINGLPFEIAKTAIMQARDARMEILKVMLGSLPAPRADLSKYAPRIQTIQIDPEKIGLLIGPGGKTIRRITETTGAQIDIAEDDSGKVFVYSNNAEAMNRAIQEIDSLCGGGGPGGSKGPAIEVGKIYTGRVTGVKEFGCFVECTPGNEGLCHVSELADFRVRRTEDVVKMGDSITVKCIGIDERSGKVRLSRKAAMKELEAQKQSSEAAPAQ.

The Mg(2+) site is built by Asp-494 and Asp-500. Residues 561–622 (PRIQTIQIDP…EAMNRAIQEI (62 aa)) form the KH domain. The S1 motif domain occupies 642–711 (GKIYTGRVTG…RSGKVRLSRK (70 aa)).

Belongs to the polyribonucleotide nucleotidyltransferase family. It depends on Mg(2+) as a cofactor.

The protein localises to the cytoplasm. The catalysed reaction is RNA(n+1) + phosphate = RNA(n) + a ribonucleoside 5'-diphosphate. Involved in mRNA degradation. Catalyzes the phosphorolysis of single-stranded polyribonucleotides processively in the 3'- to 5'-direction. In Opitutus terrae (strain DSM 11246 / JCM 15787 / PB90-1), this protein is Polyribonucleotide nucleotidyltransferase.